Reading from the N-terminus, the 156-residue chain is Small ribosomal subunit protein uS7 (156 aa).

The protein belongs to the universal ribosomal protein uS7 family. In terms of assembly, part of the 30S ribosomal subunit. Contacts proteins S9 and S11.

In terms of biological role, one of the primary rRNA binding proteins, it binds directly to 16S rRNA where it nucleates assembly of the head domain of the 30S subunit. Is located at the subunit interface close to the decoding center, probably blocks exit of the E-site tRNA. The protein is Small ribosomal subunit protein uS7 of Sodalis glossinidius (strain morsitans).